We begin with the raw amino-acid sequence, 154 residues long: Transcriptional repressor NrdR (154 aa).

The segment at 3–34 is a zinc-finger region; it reads CPFCTHPDTRVADSRLMEERNAVRRRRHCPNC. The 91-residue stretch at 49–139 folds into the ATP-cone domain; the sequence is PAVIGPDKKR…LHKRFDNPAD (91 aa).

This sequence belongs to the NrdR family. Requires Zn(2+) as cofactor.

Its function is as follows. Negatively regulates transcription of bacterial ribonucleotide reductase nrd genes and operons by binding to NrdR-boxes. In Neisseria meningitidis serogroup A / serotype 4A (strain DSM 15465 / Z2491), this protein is Transcriptional repressor NrdR.